Here is a 153-residue protein sequence, read N- to C-terminus: Aspartate carbamoyltransferase regulatory chain (153 aa).

4 residues coordinate Zn(2+): C110, C115, C138, and C141.

The protein belongs to the PyrI family. In terms of assembly, contains catalytic and regulatory chains. The cofactor is Zn(2+).

Functionally, involved in allosteric regulation of aspartate carbamoyltransferase. The chain is Aspartate carbamoyltransferase regulatory chain from Bacteroides fragilis (strain ATCC 25285 / DSM 2151 / CCUG 4856 / JCM 11019 / LMG 10263 / NCTC 9343 / Onslow / VPI 2553 / EN-2).